Here is a 158-residue protein sequence, read N- to C-terminus: Urease accessory protein UreE (158 aa).

The protein belongs to the UreE family.

The protein localises to the cytoplasm. Functionally, involved in urease metallocenter assembly. Binds nickel. Probably functions as a nickel donor during metallocenter assembly. The sequence is that of Urease accessory protein UreE from Microcystis aeruginosa (strain NIES-843 / IAM M-2473).